Here is a 366-residue protein sequence, read N- to C-terminus: Phospho-N-acetylmuramoyl-pentapeptide-transferase (366 aa).

Transmembrane regions (helical) follow at residues 27 to 47 (AALF…INSL), 71 to 91 (TPTM…LLWA), 93 to 113 (LSNV…AIGF), 138 to 158 (FVIA…SGIA), 174 to 194 (FMIN…VGAG), 205 to 225 (GLAI…AYLA), 245 to 265 (LAVV…FNAP), 268 to 288 (AIFM…TVAV), 294 to 314 (IVMA…IIQV), and 343 to 363 (QVVI…LSTL).

It belongs to the glycosyltransferase 4 family. MraY subfamily. It depends on Mg(2+) as a cofactor.

It is found in the cell inner membrane. The enzyme catalyses UDP-N-acetyl-alpha-D-muramoyl-L-alanyl-gamma-D-glutamyl-meso-2,6-diaminopimeloyl-D-alanyl-D-alanine + di-trans,octa-cis-undecaprenyl phosphate = di-trans,octa-cis-undecaprenyl diphospho-N-acetyl-alpha-D-muramoyl-L-alanyl-D-glutamyl-meso-2,6-diaminopimeloyl-D-alanyl-D-alanine + UMP. It functions in the pathway cell wall biogenesis; peptidoglycan biosynthesis. Functionally, catalyzes the initial step of the lipid cycle reactions in the biosynthesis of the cell wall peptidoglycan: transfers peptidoglycan precursor phospho-MurNAc-pentapeptide from UDP-MurNAc-pentapeptide onto the lipid carrier undecaprenyl phosphate, yielding undecaprenyl-pyrophosphoryl-MurNAc-pentapeptide, known as lipid I. The protein is Phospho-N-acetylmuramoyl-pentapeptide-transferase of Rhizobium johnstonii (strain DSM 114642 / LMG 32736 / 3841) (Rhizobium leguminosarum bv. viciae).